The sequence spans 202 residues: NADH-quinone oxidoreductase subunit C (202 aa).

It belongs to the complex I 30 kDa subunit family. As to quaternary structure, NDH-1 is composed of 14 different subunits. Subunits NuoB, C, D, E, F, and G constitute the peripheral sector of the complex.

The protein localises to the cell inner membrane. The enzyme catalyses a quinone + NADH + 5 H(+)(in) = a quinol + NAD(+) + 4 H(+)(out). Its function is as follows. NDH-1 shuttles electrons from NADH, via FMN and iron-sulfur (Fe-S) centers, to quinones in the respiratory chain. The immediate electron acceptor for the enzyme in this species is believed to be ubiquinone. Couples the redox reaction to proton translocation (for every two electrons transferred, four hydrogen ions are translocated across the cytoplasmic membrane), and thus conserves the redox energy in a proton gradient. In Albidiferax ferrireducens (strain ATCC BAA-621 / DSM 15236 / T118) (Rhodoferax ferrireducens), this protein is NADH-quinone oxidoreductase subunit C.